A 247-amino-acid polypeptide reads, in one-letter code: Cell division protein ZapD (247 aa).

Belongs to the ZapD family. As to quaternary structure, interacts with FtsZ.

It localises to the cytoplasm. In terms of biological role, cell division factor that enhances FtsZ-ring assembly. Directly interacts with FtsZ and promotes bundling of FtsZ protofilaments, with a reduction in FtsZ GTPase activity. This Escherichia coli O139:H28 (strain E24377A / ETEC) protein is Cell division protein ZapD.